The chain runs to 221 residues: UPF0758 protein YicR (221 aa).

The region spanning 99–221 is the MPN domain; that stretch reads ALLSPEMTRE…YVSFAERGWI (123 aa). Zn(2+) contacts are provided by histidine 170, histidine 172, and aspartate 183. The JAMM motif motif lies at 170-183; the sequence is HNHPSGCAEPSKAD.

It belongs to the UPF0758 family. YicR subfamily.

In Salmonella paratyphi A (strain ATCC 9150 / SARB42), this protein is UPF0758 protein YicR.